The following is a 122-amino-acid chain: Large ribosomal subunit protein uL18 (122 aa).

It belongs to the universal ribosomal protein uL18 family. As to quaternary structure, part of the 50S ribosomal subunit; part of the 5S rRNA/L5/L18/L25 subcomplex. Contacts the 5S and 23S rRNAs.

Functionally, this is one of the proteins that bind and probably mediate the attachment of the 5S RNA into the large ribosomal subunit, where it forms part of the central protuberance. The chain is Large ribosomal subunit protein uL18 from Geotalea uraniireducens (strain Rf4) (Geobacter uraniireducens).